The primary structure comprises 271 residues: NADPH-dependent 7-cyano-7-deazaguanine reductase (271 aa).

Substrate is bound at residue 81-83 (IES). 83–84 (SK) is a binding site for NADPH. Catalysis depends on cysteine 177, which acts as the Thioimide intermediate. Aspartate 184 acts as the Proton donor in catalysis. 216-217 (HE) contacts substrate. 245-246 (RG) serves as a coordination point for NADPH.

It belongs to the GTP cyclohydrolase I family. QueF type 2 subfamily. Homodimer.

The protein resides in the cytoplasm. It catalyses the reaction 7-aminomethyl-7-carbaguanine + 2 NADP(+) = 7-cyano-7-deazaguanine + 2 NADPH + 3 H(+). It functions in the pathway tRNA modification; tRNA-queuosine biosynthesis. Its function is as follows. Catalyzes the NADPH-dependent reduction of 7-cyano-7-deazaguanine (preQ0) to 7-aminomethyl-7-deazaguanine (preQ1). This is NADPH-dependent 7-cyano-7-deazaguanine reductase from Xanthomonas campestris pv. campestris (strain B100).